A 120-amino-acid polypeptide reads, in one-letter code: Ribonuclease P protein component (120 aa).

This sequence belongs to the RnpA family. Consists of a catalytic RNA component (M1 or rnpB) and a protein subunit.

It carries out the reaction Endonucleolytic cleavage of RNA, removing 5'-extranucleotides from tRNA precursor.. In terms of biological role, RNaseP catalyzes the removal of the 5'-leader sequence from pre-tRNA to produce the mature 5'-terminus. It can also cleave other RNA substrates such as 4.5S RNA. The protein component plays an auxiliary but essential role in vivo by binding to the 5'-leader sequence and broadening the substrate specificity of the ribozyme. The sequence is that of Ribonuclease P protein component from Mycobacterium marinum (strain ATCC BAA-535 / M).